A 308-amino-acid chain; its full sequence is GTPase Era (308 aa).

Positions 9–179 constitute an Era-type G domain; sequence RAGFVALIGE…RAWLGASLPE (171 aa). The segment at 17–24 is G1; the sequence is GEPNAGKS. 17–24 is a binding site for GTP; that stretch reads GEPNAGKS. Residues 43–47 are G2; it reads QTTRA. Positions 64 to 67 are G3; sequence DTPG. Residues 64-68 and 129-132 contribute to the GTP site; these read DTPGL and NKID. Residues 129-132 form a G4 region; that stretch reads NKID. A G5 region spans residues 158 to 160; the sequence is ISA. In terms of domain architecture, KH type-2 spans 210–287; it reads LHQELPYQLT…HLFLQVKVRP (78 aa).

The protein belongs to the TRAFAC class TrmE-Era-EngA-EngB-Septin-like GTPase superfamily. Era GTPase family. In terms of assembly, monomer.

The protein resides in the cytoplasm. It is found in the cell inner membrane. An essential GTPase that binds both GDP and GTP, with rapid nucleotide exchange. Plays a role in 16S rRNA processing and 30S ribosomal subunit biogenesis and possibly also in cell cycle regulation and energy metabolism. The sequence is that of GTPase Era from Dinoroseobacter shibae (strain DSM 16493 / NCIMB 14021 / DFL 12).